The sequence spans 304 residues: tRNA pseudouridine synthase B (304 aa).

D38 acts as the Nucleophile in catalysis.

This sequence belongs to the pseudouridine synthase TruB family. Type 1 subfamily.

The catalysed reaction is uridine(55) in tRNA = pseudouridine(55) in tRNA. Responsible for synthesis of pseudouridine from uracil-55 in the psi GC loop of transfer RNAs. This chain is tRNA pseudouridine synthase B, found in Listeria monocytogenes serotype 4b (strain F2365).